The sequence spans 205 residues: Glycerol-3-phosphate acyltransferase (205 aa).

The next 5 membrane-spanning stretches (helical) occupy residues 3–23 (VFAL…SAIL), 53–73 (GVAA…VWLA), 80–100 (PFYL…PVFF), 112–132 (LGAI…TWLL), and 138–158 (GYSS…VWWF).

Belongs to the PlsY family. As to quaternary structure, probably interacts with PlsX.

It is found in the cell inner membrane. The enzyme catalyses an acyl phosphate + sn-glycerol 3-phosphate = a 1-acyl-sn-glycero-3-phosphate + phosphate. It participates in lipid metabolism; phospholipid metabolism. Functionally, catalyzes the transfer of an acyl group from acyl-phosphate (acyl-PO(4)) to glycerol-3-phosphate (G3P) to form lysophosphatidic acid (LPA). This enzyme utilizes acyl-phosphate as fatty acyl donor, but not acyl-CoA or acyl-ACP. The protein is Glycerol-3-phosphate acyltransferase of Erwinia tasmaniensis (strain DSM 17950 / CFBP 7177 / CIP 109463 / NCPPB 4357 / Et1/99).